Consider the following 283-residue polypeptide: Pantothenate synthetase (283 aa).

30–37 serves as a coordination point for ATP; that stretch reads MGNLHQGH. The active-site Proton donor is H37. Position 61 (Q61) interacts with (R)-pantoate. Residue Q61 participates in beta-alanine binding. ATP is bound at residue 149–152; that stretch reads GEKD. Q155 serves as a coordination point for (R)-pantoate. ATP-binding positions include V178 and 186 to 189; that span reads FSSR.

The protein belongs to the pantothenate synthetase family. In terms of assembly, homodimer.

It localises to the cytoplasm. The enzyme catalyses (R)-pantoate + beta-alanine + ATP = (R)-pantothenate + AMP + diphosphate + H(+). It functions in the pathway cofactor biosynthesis; (R)-pantothenate biosynthesis; (R)-pantothenate from (R)-pantoate and beta-alanine: step 1/1. In terms of biological role, catalyzes the condensation of pantoate with beta-alanine in an ATP-dependent reaction via a pantoyl-adenylate intermediate. The polypeptide is Pantothenate synthetase (Proteus mirabilis (strain HI4320)).